Consider the following 229-residue polypeptide: Histone H3-like centromeric protein CSE4 (229 aa).

Polar residues predominate over residues 1-35 (MSSKQQWVSSAIQSDSSGRSLSNVNRLAGDQQSIN). A disordered region spans residues 1–78 (MSSKQQWVSS…DIETDYEDQA (78 aa)). The segment covering 53–68 (PRREERRRYESSKSDL) has biased composition (basic and acidic residues). The short motif at 115–132 (KRREKQRKQSLKRVEKKY) is the Nuclear localization signal element. Positions 132 to 229 (YTPSELALYE…LARRIRGQFI (98 aa)) are H3-like.

It belongs to the histone H3 family. As to quaternary structure, component of centromeric nucleosomes, where DNA is wrapped around a histone octamer core. The octamer contains two molecules each of H2A, H2B, CSE4/CENPA and H4 assembled in one CSE4-H4 heterotetramer and two H2A-H2B heterodimers. Interacts with the inner kinetochore. Interacts with the central kinetochore protein CTF19. Interacts with YTA7. In terms of processing, ubiquitinated. Is degraded through ubiquitin-mediated proteolysis when not protected by its association to the kinetochore.

It is found in the nucleus. The protein resides in the chromosome. It localises to the centromere. Histone H3-like nucleosomal protein that is specifically found in centromeric nucleosomes. Replaces conventional H3 in the nucleosome core of centromeric chromatin that serves as an assembly site for the inner kinetochore. Required for recruitment and assembly of kinetochore proteins, mitotic progression and chromosome segregation. May serve as an epigenetic mark that propagates centromere identity through replication and cell division. Required for functional chromatin architecture at the yeast 2-micron circle partitioning locus and promotes equal plasmid segregation. This chain is Histone H3-like centromeric protein CSE4 (CSE4), found in Saccharomyces cerevisiae (strain ATCC 204508 / S288c) (Baker's yeast).